Here is a 657-residue protein sequence, read N- to C-terminus: Pentatricopeptide repeat-containing protein CRR2, chloroplastic (657 aa).

The N-terminal 51 residues, 1–51 (MFLSHPPQVIQPTYHTVNFLPRSPLKPPSCSVALNNPSISSGAGAKISNNQ), are a transit peptide targeting the chloroplast. 12 PPR repeats span residues 45–75 (AKISNNQLIQSLCKEGKLKQAIRVLSQESSP), 76–110 (SQQTYELLILCCGHRSSLSDALRVHRHILDNGSDQ), 111–141 (DPFLATKLIGMYSDLGSVDYARKVFDKTRKR), 142–176 (TIYVWNALFRALTLAGHGEEVLGLYWKMNRIGVES), 177–215 (DRFTYTYVLKACVASECTVNHLMKGKEIHAHLTRRGYSS), 216–246 (HVYIMTTLVDMYARFGCVDYASYVFGGMPVR), 247–277 (NVVSWSAMIACYAKNGKAFEALRTFREMMRE), 284–318 (NSVTMVSVLQACASLAALEQGKLIHGYILRRGLDS), 319–349 (ILPVISALVTMYGRCGKLEVGQRVFDRMHDR), 350–384 (DVVSWNSLISSYGVHGYGKKAIQIFEEMLANGASP), 385–420 (TPVTFVSVLGACSHEGLVEEGKRLFETMWRDHGIKP), and 421–451 (QIEHYACMVDLLGRANRLDEAAKMVQDMRTE). The interval 456 to 531 (VWGSLLGSCR…LPGRCWMEVR (76 aa)) is type E motif. The segment at 532–562 (RKMYSFVSVDEFNPLMEQIHAFLVKLAEDMK) is type E(+) motif. The segment at 563–657 (EKGYIPQTKG…NGVCSCGDYW (95 aa)) is type DYW motif.

It belongs to the PPR family. PCMP-H subfamily.

It localises to the plastid. It is found in the chloroplast. Functionally, required for the intergenic processing between chloroplast rsp7 and ndhB transcripts. Necessary for chloroplast NADH dehydrogenase-like (NDH) complex-dependent cyclic electron transport around PSI (CET). The protein is Pentatricopeptide repeat-containing protein CRR2, chloroplastic of Arabidopsis thaliana (Mouse-ear cress).